Reading from the N-terminus, the 72-residue chain is Prokaryotic ubiquitin-like protein Pup (72 aa).

A compositionally biased stretch (gly residues) spans 1-10 (MATKDTGGGQ). The tract at residues 1 to 45 (MATKDTGGGQQKATRNTEEVEEQAQDAQASEDLKERQEKLSDDVD) is disordered. Residues 9 to 60 (GQQKATRNTEEVEEQAQDAQASEDLKERQEKLSDDVDSVLDEIDDVLEENAE) are a coiled coil. The tract at residues 28–66 (QASEDLKERQEKLSDDVDSVLDEIDDVLEENAEDFVRSF) is ARC ATPase binding. Positions 31–42 (EDLKERQEKLSD) are enriched in basic and acidic residues. Residue Glu-72 forms an Isoglutamyl lysine isopeptide (Glu-Lys) (interchain with K-? in acceptor proteins) linkage.

It belongs to the prokaryotic ubiquitin-like protein family. Strongly interacts with the proteasome-associated ATPase ARC through a hydrophobic interface; the interacting region of Pup lies in its C-terminal half. There is one Pup binding site per ARC hexamer ring.

Its pathway is protein degradation; proteasomal Pup-dependent pathway. Its function is as follows. Protein modifier that is covalently attached to lysine residues of substrate proteins, thereby targeting them for proteasomal degradation. The tagging system is termed pupylation. The sequence is that of Prokaryotic ubiquitin-like protein Pup from Streptomyces avermitilis (strain ATCC 31267 / DSM 46492 / JCM 5070 / NBRC 14893 / NCIMB 12804 / NRRL 8165 / MA-4680).